The sequence spans 193 residues: Thioredoxin M4, chloroplastic (193 aa).

A chloroplast-targeting transit peptide spans 1-82; the sequence is MASLLDSVTV…RIACEAQDTT (82 aa). A Thioredoxin domain is found at 83-192; sequence AAAVEVPNLS…LEKTIERFLV (110 aa). Active-site nucleophile residues include C116 and C119. C116 and C119 are disulfide-bonded.

Belongs to the thioredoxin family. Plant M-type subfamily.

Its subcellular location is the plastid. It localises to the chloroplast stroma. Thiol-disulfide oxidoreductase involved in the redox regulation of enzyme of the oxidative pentose phosphate pathway. Under reducing conditions, inhibits the glucose-6-phosphate dehydrogenase. This chain is Thioredoxin M4, chloroplastic, found in Arabidopsis thaliana (Mouse-ear cress).